A 179-amino-acid polypeptide reads, in one-letter code: Large ribosomal subunit protein uL5 (179 aa).

Belongs to the universal ribosomal protein uL5 family. In terms of assembly, part of the 50S ribosomal subunit; part of the 5S rRNA/L5/L18/L25 subcomplex. Contacts the 5S rRNA and the P site tRNA. Forms a bridge to the 30S subunit in the 70S ribosome.

In terms of biological role, this is one of the proteins that bind and probably mediate the attachment of the 5S RNA into the large ribosomal subunit, where it forms part of the central protuberance. In the 70S ribosome it contacts protein S13 of the 30S subunit (bridge B1b), connecting the 2 subunits; this bridge is implicated in subunit movement. Contacts the P site tRNA; the 5S rRNA and some of its associated proteins might help stabilize positioning of ribosome-bound tRNAs. The sequence is that of Large ribosomal subunit protein uL5 from Yersinia pestis.